A 126-amino-acid polypeptide reads, in one-letter code: Large ribosomal subunit protein uL22 (126 aa).

The protein belongs to the universal ribosomal protein uL22 family. As to quaternary structure, part of the 50S ribosomal subunit.

This protein binds specifically to 23S rRNA; its binding is stimulated by other ribosomal proteins, e.g. L4, L17, and L20. It is important during the early stages of 50S assembly. It makes multiple contacts with different domains of the 23S rRNA in the assembled 50S subunit and ribosome. Functionally, the globular domain of the protein is located near the polypeptide exit tunnel on the outside of the subunit, while an extended beta-hairpin is found that lines the wall of the exit tunnel in the center of the 70S ribosome. The protein is Large ribosomal subunit protein uL22 of Sphingopyxis alaskensis (strain DSM 13593 / LMG 18877 / RB2256) (Sphingomonas alaskensis).